We begin with the raw amino-acid sequence, 159 residues long: Cyclic pyranopterin monophosphate synthase (159 aa).

Residues 75–77 (LCH) and 113–114 (ME) each bind substrate. Residue D128 is part of the active site.

The protein belongs to the MoaC family. Homohexamer; trimer of dimers.

The catalysed reaction is (8S)-3',8-cyclo-7,8-dihydroguanosine 5'-triphosphate = cyclic pyranopterin phosphate + diphosphate. It participates in cofactor biosynthesis; molybdopterin biosynthesis. Functionally, catalyzes the conversion of (8S)-3',8-cyclo-7,8-dihydroguanosine 5'-triphosphate to cyclic pyranopterin monophosphate (cPMP). The sequence is that of Cyclic pyranopterin monophosphate synthase from Photorhabdus laumondii subsp. laumondii (strain DSM 15139 / CIP 105565 / TT01) (Photorhabdus luminescens subsp. laumondii).